We begin with the raw amino-acid sequence, 359 residues long: uncharacterized protein (359 aa).

The first 17 residues, 1–17 (MLGRSLTSVLIVPTGIG), serve as a signal peptide directing secretion. Cys-18 is lipidated: N-palmitoyl cysteine. Residue Cys-18 is the site of S-diacylglycerol cysteine attachment.

It is found in the cell membrane. This is an uncharacterized protein from Synechococcus sp. (strain ATCC 27144 / PCC 6301 / SAUG 1402/1) (Anacystis nidulans).